Reading from the N-terminus, the 140-residue chain is Large ribosomal subunit protein uL15 (140 aa).

The segment at 1–32 (MDTKKFRGSRTCGGGTHKNRRGAGNRGGRGKA) is disordered.

The protein belongs to the universal ribosomal protein uL15 family. Part of the 50S ribosomal subunit.

Functionally, binds to the 23S rRNA. This is Large ribosomal subunit protein uL15 from Methanosarcina acetivorans (strain ATCC 35395 / DSM 2834 / JCM 12185 / C2A).